The chain runs to 102 residues: NADH-quinone oxidoreductase subunit K (102 aa).

Transmembrane regions (helical) follow at residues 6–26 (LTGF…GVLA), 30–50 (ILFQ…AFIA), and 63–83 (MFVL…ALFL).

This sequence belongs to the complex I subunit 4L family. NDH-1 is composed of 14 different subunits. Subunits NuoA, H, J, K, L, M, N constitute the membrane sector of the complex.

Its subcellular location is the cell inner membrane. It carries out the reaction a quinone + NADH + 5 H(+)(in) = a quinol + NAD(+) + 4 H(+)(out). Its function is as follows. NDH-1 shuttles electrons from NADH, via FMN and iron-sulfur (Fe-S) centers, to quinones in the respiratory chain. The immediate electron acceptor for the enzyme in this species is believed to be ubiquinone. Couples the redox reaction to proton translocation (for every two electrons transferred, four hydrogen ions are translocated across the cytoplasmic membrane), and thus conserves the redox energy in a proton gradient. In Rhodopseudomonas palustris (strain BisA53), this protein is NADH-quinone oxidoreductase subunit K.